Here is an 872-residue protein sequence, read N- to C-terminus: Alanine--tRNA ligase (872 aa).

Residues His-567, His-571, Cys-669, and His-673 each coordinate Zn(2+).

This sequence belongs to the class-II aminoacyl-tRNA synthetase family. The cofactor is Zn(2+).

The protein localises to the cytoplasm. It catalyses the reaction tRNA(Ala) + L-alanine + ATP = L-alanyl-tRNA(Ala) + AMP + diphosphate. In terms of biological role, catalyzes the attachment of alanine to tRNA(Ala) in a two-step reaction: alanine is first activated by ATP to form Ala-AMP and then transferred to the acceptor end of tRNA(Ala). Also edits incorrectly charged Ser-tRNA(Ala) and Gly-tRNA(Ala) via its editing domain. This chain is Alanine--tRNA ligase, found in Streptococcus pyogenes serotype M6 (strain ATCC BAA-946 / MGAS10394).